The following is a 267-amino-acid chain: Transcription factor HES-1 (267 aa).

Residues 1-45 (MPADLMEKNSSSPVAATPASMSNTPDKPKTASEHRKSSKPIMEKR) form a disordered region. Residues 8-25 (KNSSSPVAATPASMSNTP) are compositionally biased toward polar residues. The span at 26–35 (DKPKTASEHR) shows a compositional bias: basic and acidic residues. One can recognise a bHLH domain in the interval 34-91 (HRKSSKPIMEKRRRARINESLGQLKTLILDALKKDSSRHSKLEKADILEMTVKHLRNL). Residues 110–143 (YRAGFSECMNEVTRFLSTCEGVNTDVRTRLLGHL) form the Orange domain. Positions 264–267 (WRPW) match the WRPW motif motif.

In terms of assembly, transcription repression requires formation of a complex with a corepressor protein of the Groucho/TLE family. Interacts with the bHLH protein hes2, and binds DNA in the form of a heterodimer with the bHLH protein hey1/hrt1. Interacts with the bHLH protein hes6; this interaction may inhibit the transcriptional repressor activity.

It localises to the nucleus. Its function is as follows. Transcriptional repressor of a subset of early mesodermal genes including myod1 and t/bra. Binds DNA on N-box motifs: 5'-CACNAG-3'. Acts as a negative regulator of myogenesis, mediating Notch signaling to repress expression of myod1. In Xenopus tropicalis (Western clawed frog), this protein is Transcription factor HES-1.